A 216-amino-acid polypeptide reads, in one-letter code: Dephospho-CoA kinase (216 aa).

One can recognise a DPCK domain in the interval 18–216 (IIGVIGPPCS…SELASVLQSK (199 aa)). 26–31 (CSGKST) is a binding site for ATP.

Belongs to the CoaE family.

The protein resides in the cytoplasm. It carries out the reaction 3'-dephospho-CoA + ATP = ADP + CoA + H(+). The protein operates within cofactor biosynthesis; coenzyme A biosynthesis; CoA from (R)-pantothenate: step 5/5. Functionally, catalyzes the phosphorylation of the 3'-hydroxyl group of dephosphocoenzyme A to form coenzyme A. This is Dephospho-CoA kinase from Rhodopirellula baltica (strain DSM 10527 / NCIMB 13988 / SH1).